A 322-amino-acid chain; its full sequence is tRNA U34 carboxymethyltransferase (322 aa).

Residues lysine 91, tryptophan 105, lysine 110, glycine 129, 179 to 180, methionine 195, tyrosine 199, and arginine 314 each bind carboxy-S-adenosyl-L-methionine; that span reads LE.

This sequence belongs to the class I-like SAM-binding methyltransferase superfamily. CmoB family. In terms of assembly, homotetramer.

The enzyme catalyses carboxy-S-adenosyl-L-methionine + 5-hydroxyuridine(34) in tRNA = 5-carboxymethoxyuridine(34) in tRNA + S-adenosyl-L-homocysteine + H(+). Functionally, catalyzes carboxymethyl transfer from carboxy-S-adenosyl-L-methionine (Cx-SAM) to 5-hydroxyuridine (ho5U) to form 5-carboxymethoxyuridine (cmo5U) at position 34 in tRNAs. The sequence is that of tRNA U34 carboxymethyltransferase from Pseudomonas aeruginosa (strain LESB58).